A 199-amino-acid chain; its full sequence is Thymidine kinase (199 aa).

ATP contacts are provided by residues 15 to 22 (GSMFSGKS) and 88 to 91 (DEVQ). The active-site Proton acceptor is the E89. Positions 145, 148, 183, and 186 each coordinate Zn(2+).

This sequence belongs to the thymidine kinase family. Homotetramer.

The protein resides in the cytoplasm. The enzyme catalyses thymidine + ATP = dTMP + ADP + H(+). The polypeptide is Thymidine kinase (Staphylococcus saprophyticus subsp. saprophyticus (strain ATCC 15305 / DSM 20229 / NCIMB 8711 / NCTC 7292 / S-41)).